The sequence spans 322 residues: Cysteine protease yopT1 (322 aa).

Residues C139, H258, and D274 contribute to the active site.

Belongs to the peptidase C58 family. As to quaternary structure, interacts with human ARHA.

It is found in the secreted. Cysteine protease, which is translocated into infected cells and plays a central role in pathogenesis by cleaving the C-terminus end of the human small GTPase RhoA/ARHA, a regulator of cytoskeleton. Once cleaved, ARHA loses its lipid modification, and is released from the cell membrane, leading to the subsequent disruption of actin cytoskeleton of the host cell. This chain is Cysteine protease yopT1 (yopT1), found in Yersinia enterocolitica.